Reading from the N-terminus, the 195-residue chain is Glycerol-3-phosphate acyltransferase (195 aa).

4 helical membrane passes run 2–22 (INLLVIISAYFIGNFSTSFIV), 79–99 (AALMAGIAVVIGHNWPVLLGF), 111–131 (VALIASPLAAIASISLGVVIL), and 146–166 (TILPFFLFSYGLEYFIFGLVL).

This sequence belongs to the PlsY family. Probably interacts with PlsX.

The protein localises to the cell membrane. It carries out the reaction an acyl phosphate + sn-glycerol 3-phosphate = a 1-acyl-sn-glycero-3-phosphate + phosphate. It participates in lipid metabolism; phospholipid metabolism. Functionally, catalyzes the transfer of an acyl group from acyl-phosphate (acyl-PO(4)) to glycerol-3-phosphate (G3P) to form lysophosphatidic acid (LPA). This enzyme utilizes acyl-phosphate as fatty acyl donor, but not acyl-CoA or acyl-ACP. This is Glycerol-3-phosphate acyltransferase from Alkaliphilus metalliredigens (strain QYMF).